The chain runs to 510 residues: JmjC domain-containing histone demethylation protein 1 (510 aa).

The PHD-type zinc finger occupies 2–53 (PNRCDFCTSSSTKDKQQWTQCDGCDRWVHDVCVSITDPVSYAKYHCPTCTKT). The JmjC domain maps to 216–365 (TLVRELDLVD…TQIDIAGIEV (150 aa)). A substrate-binding site is contributed by Thr255. Fe cation is bound by residues His258 and Asp260. Lys275 is a binding site for substrate. His333 is a Fe cation binding site. The segment at 475–510 (KGESKEKHKIESQLPEEKILQGSKLESKEEVQTENF) is disordered. Residues 477–510 (ESKEKHKIESQLPEEKILQGSKLESKEEVQTENF) are compositionally biased toward basic and acidic residues.

The protein belongs to the JHDM1 histone demethylase family. Fe(2+) is required as a cofactor.

Its subcellular location is the nucleus. The catalysed reaction is N(6),N(6)-dimethyl-L-lysyl(36)-[histone H3] + 2 2-oxoglutarate + 2 O2 = L-lysyl(36)-[histone H3] + 2 formaldehyde + 2 succinate + 2 CO2. Functionally, histone demethylase that specifically demethylates 'Lys-36' of histone H3, thereby playing a central role in histone code. The chain is JmjC domain-containing histone demethylation protein 1 (JHD1) from Yarrowia lipolytica (strain CLIB 122 / E 150) (Yeast).